The primary structure comprises 535 residues: Probable monogalactosyldiacylglycerol synthase, chloroplastic (535 aa).

Residues 1 to 113 constitute a chloroplast transit peptide; it reads MMQHSSSVTQ…KIPLGFASVG (113 aa).

It belongs to the glycosyltransferase 28 family.

It is found in the plastid. The protein resides in the chloroplast membrane. The catalysed reaction is a 1,2-diacyl-sn-glycerol + UDP-alpha-D-galactose = a 1,2-diacyl-3-O-(beta-D-galactosyl)-sn-glycerol + UDP + H(+). Functionally, involved in the synthesis of the major structural component of photosynthetic membranes. This chain is Probable monogalactosyldiacylglycerol synthase, chloroplastic (MGD A), found in Nicotiana tabacum (Common tobacco).